Here is a 340-residue protein sequence, read N- to C-terminus: Phenylalanine--tRNA ligase alpha subunit (340 aa).

E254 is a binding site for Mg(2+).

This sequence belongs to the class-II aminoacyl-tRNA synthetase family. Phe-tRNA synthetase alpha subunit type 1 subfamily. In terms of assembly, tetramer of two alpha and two beta subunits. Requires Mg(2+) as cofactor.

The protein localises to the cytoplasm. The catalysed reaction is tRNA(Phe) + L-phenylalanine + ATP = L-phenylalanyl-tRNA(Phe) + AMP + diphosphate + H(+). This chain is Phenylalanine--tRNA ligase alpha subunit, found in Acidithiobacillus ferrooxidans (strain ATCC 23270 / DSM 14882 / CIP 104768 / NCIMB 8455) (Ferrobacillus ferrooxidans (strain ATCC 23270)).